The following is a 471-amino-acid chain: Ubiquitin-conjugating enzyme E2 variant 3 (471 aa).

Residues 2 to 145 (EFDCEGLRRL…QEELPMYSLS (144 aa)) enclose the UEV domain. 191 to 219 (GELGIACTLAISAKGIADRLVLLDLSEGT) contributes to the NAD(+) binding site.

The protein in the N-terminal section; belongs to the ubiquitin-conjugating enzyme family. UEV subfamily. This sequence in the C-terminal section; belongs to the LDH/MDH superfamily. Homodimer. In terms of tissue distribution, colon, colon carcinoma cell lines, normal cervical epithelium, carcinomas of the uterine cervix and peripheral blood leukocytes.

Its function is as follows. Possible negative regulator of polyubiquitination. The polypeptide is Ubiquitin-conjugating enzyme E2 variant 3 (Homo sapiens (Human)).